The following is a 598-amino-acid chain: Serine/threonine-protein kinase cot-1 (598 aa).

Composition is skewed to polar residues over residues 1 to 16 (MDNT…TNDT), 24 to 33 (TYPTTPSTFP), and 99 to 126 (PRTS…TQTE). Disordered regions lie at residues 1-46 (MDNT…GGSQ), 80-148 (GSAG…NQKK), and 163-190 (RARE…RESI). The Protein kinase domain maps to 214 to 518 (YQTIKIIGKG…AHEIKSHAFF (305 aa)). ATP contacts are provided by residues 220 to 228 (IGKGAFGEV) and K243. Residue D337 is the Proton acceptor of the active site. Residues 519 to 598 (RGVEFDSLRR…TFKRFDNNFR (80 aa)) form the AGC-kinase C-terminal domain.

The protein belongs to the protein kinase superfamily. STE Ser/Thr protein kinase family. COT1 subfamily.

The enzyme catalyses L-seryl-[protein] + ATP = O-phospho-L-seryl-[protein] + ADP + H(+). It catalyses the reaction L-threonyl-[protein] + ATP = O-phospho-L-threonyl-[protein] + ADP + H(+). In terms of biological role, protein kinase required for hyphal elongation. The polypeptide is Serine/threonine-protein kinase cot-1 (cot-1) (Neurospora crassa (strain ATCC 24698 / 74-OR23-1A / CBS 708.71 / DSM 1257 / FGSC 987)).